Here is a 226-residue protein sequence, read N- to C-terminus: Fibrillarin-like rRNA/tRNA 2'-O-methyltransferase (226 aa).

S-adenosyl-L-methionine-binding positions include 82 to 83, 100 to 101, 125 to 126, and 145 to 148; these read TT, EF, DA, and DVAQ.

The protein belongs to the methyltransferase superfamily. Fibrillarin family. As to quaternary structure, interacts with nop5. Component of box C/D small ribonucleoprotein (sRNP) particles that contain rpl7ae, FlpA and nop5, plus a guide RNA.

Its function is as follows. Involved in pre-rRNA and tRNA processing. Utilizes the methyl donor S-adenosyl-L-methionine to catalyze the site-specific 2'-hydroxyl methylation of ribose moieties in rRNA and tRNA. Site specificity is provided by a guide RNA that base pairs with the substrate. Methylation occurs at a characteristic distance from the sequence involved in base pairing with the guide RNA. The sequence is that of Fibrillarin-like rRNA/tRNA 2'-O-methyltransferase from Methanosarcina barkeri (strain Fusaro / DSM 804).